Reading from the N-terminus, the 436-residue chain is Cytokine receptor-like factor 3 (436 aa).

Positions 9–87 (LMQEAWESID…VSAIEQENIK (79 aa)) form a coiled coil. In terms of domain architecture, Fibronectin type-III spans 177–270 (PPVQIEELIE…LQTSRTTLVP (94 aa)).

This sequence belongs to the cytokine receptor-like factor 3 family.

Its subcellular location is the cytoplasm. Functionally, may play a role in the negative regulation of cell cycle progression. This Xenopus laevis (African clawed frog) protein is Cytokine receptor-like factor 3 (crlf3).